A 256-amino-acid polypeptide reads, in one-letter code: Enolase-phosphatase E1 (256 aa).

The Mg(2+) site is built by D14 and E16. Residues 142 to 143 (SS) and K176 each bind substrate. Residue D201 participates in Mg(2+) binding.

It belongs to the HAD-like hydrolase superfamily. MasA/MtnC family. As to quaternary structure, monomer. Mg(2+) is required as a cofactor.

Its subcellular location is the cytoplasm. It is found in the nucleus. The enzyme catalyses 5-methylsulfanyl-2,3-dioxopentyl phosphate + H2O = 1,2-dihydroxy-5-(methylsulfanyl)pent-1-en-3-one + phosphate. Its pathway is amino-acid biosynthesis; L-methionine biosynthesis via salvage pathway; L-methionine from S-methyl-5-thio-alpha-D-ribose 1-phosphate: step 3/6. It participates in amino-acid biosynthesis; L-methionine biosynthesis via salvage pathway; L-methionine from S-methyl-5-thio-alpha-D-ribose 1-phosphate: step 4/6. Its function is as follows. Bifunctional enzyme that catalyzes the enolization of 2,3-diketo-5-methylthiopentyl-1-phosphate (DK-MTP-1-P) into the intermediate 2-hydroxy-3-keto-5-methylthiopentenyl-1-phosphate (HK-MTPenyl-1-P), which is then dephosphorylated to form the acireductone 1,2-dihydroxy-3-keto-5-methylthiopentene (DHK-MTPene). This chain is Enolase-phosphatase E1, found in Drosophila yakuba (Fruit fly).